The sequence spans 2472 residues: Nuclear receptor corepressor 2 (2472 aa).

3 disordered regions span residues 1–20 (MSGS…PRYP), 47–168 (RDYT…SRLS), and 190–220 (ISKL…PPIE). Arg18 bears the Asymmetric dimethylarginine mark. Positions 51–60 (SHLSPGSIIQ) are enriched in polar residues. A phosphoserine mark is found at Ser54 and Ser67. 2 stretches are compositionally biased toward basic and acidic residues: residues 78–88 (RSQELHLRPES) and 96–112 (GKPD…RLEL). Phosphoserine is present on residues Ser149 and Ser152. Residues 165–207 (SRLSKEELIQNMDRVDREITMVEQQISKLKKKQQQLEEEAAKP) are a coiled coil. Over residues 203–212 (EAAKPPEPEK) the composition is skewed to basic and acidic residues. Ser215 is modified (phosphoserine). Residues 254-312 (LPLYNQPSDTRQYHENIKINQAMRKKLILYFKRRNHARKQWEQRFCQRYDQLMEAWEKK) are interaction with SIN3A/B. The interval 389-480 (MRQLAVIPPM…YLTKKNENYK (92 aa)) is deacetylase activation domain (DAD). Residues 427-478 (QVTNMWSEQERDTFREKFMQHPKNFGLIASFLERKTVAECVLYYYLTKKNEN) form the SANT 1 domain. 1D-myo-inositol 1,4,5,6-tetrakisphosphate contacts are provided by Lys449, Tyr470, and Tyr471. Disordered regions lie at residues 487-618 (YRRR…EMET), 665-1107 (HKLK…RPPI), and 1173-1197 (SATS…YRGS). Residues 492–560 (KSQQQQQQQQ…GEDNDEKEAV (69 aa)) are a coiled coil. A Phosphoserine modification is found at Ser493. Over residues 494 to 507 (QQQQQQQQQQQQQQ) the composition is skewed to low complexity. Positions 512–548 (SQEEKEEKEKEKEADKEEEKQDAENEKEELSKEKTDD) are enriched in basic and acidic residues. Thr549 bears the Phosphothreonine mark. Phosphoserine is present on Ser550. Residues 592–609 (ATPQQSSELASMEMNESS) show a composition bias toward polar residues. The SANT 2 domain maps to 606–657 (NESSRWTEEEMETAKKGLLEHGRNWSAIARMVGSKTVSQCKNFYFNYKKRQN). Residues 658–682 (LDEILQQHKLKMEKERNARRKKKKT) are a coiled coil. Positions 709 to 718 (NEEELAEEAE) are enriched in acidic residues. Residues 739 to 750 (VNNSSDTESVPS) show a composition bias toward polar residues. A phosphoserine mark is found at Ser747 and Ser750. Composition is skewed to pro residues over residues 773–782 (TQPPVPPPEE) and 789–811 (EPSP…PAAP). Basic and acidic residues-rich tracts occupy residues 831–850 (EDAK…KPEE) and 859–868 (ESVKSDHKEE). At Lys878 the chain carries N6-acetyllysine. Positions 905–919 (GSSSGATQDSDSSAT) are enriched in low complexity. Ser938 carries the phosphoserine modification. Thr945 is subject to Phosphothreonine. At Ser955 the chain carries Phosphoserine. Lys958 carries the N6-acetyllysine modification. The span at 978–988 (KVHEPPREDTV) shows a compositional bias: basic and acidic residues. Positions 989–1000 (PPKPVPPVPPPT) are enriched in pro residues. Positions 1090–1101 (LPLGLHDSARPV) are enriched in low complexity. An N6-acetyllysine mark is found at Lys1181 and Lys1209. Position 1220 is a phosphoserine (Ser1220). Disordered regions lie at residues 1254 to 1277 (SVSQ…AAPK), 1345 to 1378 (LKRE…LKLK), and 1410 to 1443 (PLAP…KHDV). Position 1350 is a phosphothreonine (Thr1350). Basic and acidic residues predominate over residues 1359–1368 (DLTETYKPRP). Phosphoserine is present on residues Ser1449, Ser1509, and Ser1565. The disordered stretch occupies residues 1479 to 1578 (KSRSGTSSGA…TVPEHHPHPI (100 aa)). Arg1624 bears the Asymmetric dimethylarginine mark. Residues 1734–1826 (TAPPPFSSRH…PISPRTQDAL (93 aa)) are disordered. The span at 1740–1753 (SSRHSSSPLSPGGP) shows a compositional bias: low complexity. A phosphoserine mark is found at Ser1746 and Ser1749. Over residues 1765–1778 (SERERERERERDKS) the composition is skewed to basic and acidic residues. The span at 1807–1826 (RPASHTHQHSPISPRTQDAL) shows a compositional bias: polar residues. Phosphoserine is present on Ser1819. Position 1854 is an omega-N-methylarginine (Arg1854). 3 disordered regions span residues 1857-1878 (RSTS…THCP), 1898-1986 (KETS…KPFS), and 2001-2078 (AGYS…LQTA). The span at 1899 to 1913 (ETSRVARPERPRVDA) shows a compositional bias: basic and acidic residues. Lys1920 is subject to N6-acetyllysine. The segment covering 1925–1938 (EPASSPSKSSEPRS) has biased composition (low complexity). The residue at position 1963 (Ser1963) is a Phosphoserine. Position 1983 is an N6-acetyllysine (Lys1983). Residues Ser2004, Ser2012, Ser2015, Ser2016, and Ser2018 each carry the phosphoserine modification. A Phosphothreonine modification is found at Thr2020. A compositionally biased stretch (basic and acidic residues) spans 2020–2043 (THDKGLSKPLEELEKSHLEGELRH). Ser2035 is subject to Phosphoserine. Residues 2064–2075 (LPESQPSSSPLL) show a composition bias toward low complexity. A required for interaction with RARA in the absence of its ligand region spans residues 2086-2090 (RVVTL). The short motif at 2094–2098 (ISEVI) is the CORNR box of ID1 element. The tract at residues 2132–2226 (RRPPSDLYLP…GNTSQPPAFF (95 aa)) is disordered. Phosphoserine is present on residues Ser2161, Ser2181, and Ser2215. A CORNR box of ID2 motif is present at residues 2296–2300 (LEAII). Positions 2343 to 2459 (GRSDHALTSP…HHAWDEEPKP (117 aa)) are disordered. The residue at position 2371 (Ser2371) is a Phosphoserine. Residues 2439-2450 (LAAGSGPLAGPH) show a composition bias toward low complexity.

The protein belongs to the N-CoR nuclear receptor corepressors family. As to quaternary structure, forms a large corepressor complex that contains SIN3A/B and histone deacetylases HDAC1 and HDAC2. This complex associates with the thyroid (TR) and the retinoid acid receptors (RAR) in the absence of ligand, and may stabilize their interaction with TFIIB. Interacts directly with RARA in the absence of ligand; the interaction represses RARA activity. Interacts (isoform SMRT) with HDAC10. Interacts with MINT. Component of the N-Cor repressor complex, at least composed of NCOR1, NCOR2, HDAC3, TBL1X, TBL1R, CORO2A and GPS2. Interacts with CBFA2T3 and ATXN1L. Interacts with RARB; the interaction is weak and does not repress RARB transactivational activity. Interacts (via 1D-myo-inositol 1,4,5,6-tetrakisphosphate) with HDAC3; promoting the histone deacetylase activity of HDAC3. Interacts with HDAC7 and C1D. Interacts with NR4A2; this interaction increases in the absence of PITX3. Interacts with BCL6 (via the BTB domain), required for BCL6 transcriptional repressor activity on a subset of target genes. Forms ternary complexes with BCOR and BCL6 on target gene promoters but, on enhancer elements, interacts with BCL6 and HDAC3 to repress proximal gene expression. May interact with DEAF1. Interacts with RXRA. Interacts with MECP2. Interacts with ZBTB7A. Interacts with AR. Interacts with TBL1Y. Interacts with SANBR (via the BTB domain). As to expression, ubiquitous. Also widely expressed in early embryos.

It localises to the nucleus. In terms of biological role, transcriptional corepressor that mediates the transcriptional repression activity of some nuclear receptors by promoting chromatin condensation, thus preventing access of the basal transcription. Acts by recruiting chromatin modifiers, such as histone deacetylases HDAC1, HDAC2 and HDAC3. Required to activate the histone deacetylase activity of HDAC3. Involved in the regulation BCL6-dependent of the germinal center (GC) reactions, mainly through the control of the GC B-cells proliferation and survival. Recruited by ZBTB7A to the androgen response elements/ARE on target genes, negatively regulates androgen receptor signaling and androgen-induced cell proliferation. In Mus musculus (Mouse), this protein is Nuclear receptor corepressor 2 (Ncor2).